The primary structure comprises 101 residues: Urease subunit beta (101 aa).

This sequence belongs to the urease beta subunit family. Heterotrimer of UreA (gamma), UreB (beta) and UreC (alpha) subunits. Three heterotrimers associate to form the active enzyme.

The protein localises to the cytoplasm. It catalyses the reaction urea + 2 H2O + H(+) = hydrogencarbonate + 2 NH4(+). The protein operates within nitrogen metabolism; urea degradation; CO(2) and NH(3) from urea (urease route): step 1/1. The sequence is that of Urease subunit beta from Haemophilus influenzae (strain 86-028NP).